Consider the following 193-residue polypeptide: Flagellin B3 (193 aa).

The propeptide occupies 1-12 (MFEFITDEDERG).

It belongs to the archaeal flagellin family. In terms of processing, glycosylated.

The protein resides in the archaeal flagellum. Its function is as follows. Flagellin is the subunit protein which polymerizes to form the filaments of archaeal flagella. This chain is Flagellin B3 (flaB3), found in Halobacterium salinarum (strain ATCC 700922 / JCM 11081 / NRC-1) (Halobacterium halobium).